Here is a 61-residue protein sequence, read N- to C-terminus: Aerolysin regulatory protein (61 aa).

Basic residues predominate over residues 1–14; sequence MMIKRHLPQPRHRE. The disordered stretch occupies residues 1–61; it reads MMIKRHLPQP…GQTHTGPQIR (61 aa). Positions 51–61 are enriched in polar residues; that stretch reads DGQTHTGPQIR.

Regulation of the expression of aerolysin. This is Aerolysin regulatory protein (aerC) from Aeromonas sobria.